The primary structure comprises 776 residues: Isoamylase (776 aa).

An N-terminal signal peptide occupies residues 1–26 (MKCPKILAALLGCAVLAGVPAMPAHA). Ca(2+) is bound by residues D154, E255, T256, N258, and D285. Catalysis depends on D401, which acts as the Nucleophile. C410 and C422 are joined by a disulfide. Catalysis depends on E461, which acts as the Proton donor. Intrachain disulfides connect C546–C616 and C738–C766.

The protein belongs to the glycosyl hydrolase 13 family. In terms of assembly, monomer. Ca(2+) serves as cofactor.

It localises to the secreted. It catalyses the reaction Hydrolysis of (1-&gt;6)-alpha-D-glucosidic branch linkages in glycogen, amylopectin and their beta-limit dextrins.. The chain is Isoamylase (iam) from Pseudomonas amyloderamosa.